Consider the following 487-residue polypeptide: MLTMVGLTPAEDRSEIAFFDVETTIPFRVGQGYAILEFGSILVCPKKLVELKNYSVLVRPANLNLITPRSVKCNGIKREDVESALTFADIADTVYDILHGRIWAGHNILKFDCPRIREAFAEIGRDPPEPKGTIDSLALLTQRFGRRAGDMKMATLATYFGLGNQTHRSLDDVRMNFEVLKYCATVLFLESSLPDELIENSVTTTTPETSSRRRRTIKKSPLQSPTDQQTGENMTTIPILSFVSSAEAQTDPFDMSTLRNEIAPEVLQSDVPMEEEQNQQSETVASEGTGDQEGFMELDKISVSSIRATHVPLYDGSQTMKLQLFLGDRPLQLHCPRLKVRFGINGKFMDKAGRRRLNFVIDLYPSLCNVLQECDSAAQTISVDSGSGSDWNPLVIPMKGFLNCPTARIHIPTELNGDIDRYAAEIHQKEFSGATATQKLISSNPKAEEIESLLNPRTVLDAFLSLEPYDYQQRAGIRLVARKLVIH.

The region spanning 18 to 179 is the Exonuclease domain; that stretch reads FFDVETTIPF…LDDVRMNFEV (162 aa). Mg(2+) is bound by residues Asp-20 and Glu-22. The active-site Proton donor/acceptor is His-167. Asp-172 contributes to the Mg(2+) binding site. Disordered regions lie at residues 200 to 233 and 269 to 291; these read NSVT…TGEN and SDVP…GTGD. The span at 221-233 shows a compositional bias: polar residues; that stretch reads PLQSPTDQQTGEN.

The cofactor is Mg(2+). As to expression, expressed in the sieve elements and phloem pole pericycle cells.

The protein localises to the cytoplasm. It localises to the nucleus. Functionally, probable exonuclease involved in enuclation of sieve elements. The chain is Protein NEN2 from Arabidopsis thaliana (Mouse-ear cress).